The sequence spans 159 residues: Serine-protein kinase RsbW (159 aa).

This sequence belongs to the anti-sigma-factor family.

The enzyme catalyses L-seryl-[protein] + ATP = O-phospho-L-seryl-[protein] + ADP + H(+). The catalysed reaction is L-threonyl-[protein] + ATP = O-phospho-L-threonyl-[protein] + ADP + H(+). Its function is as follows. Negative regulator of sigma-B activity. Phosphorylates and inactivates its specific antagonist protein, RsbV. Upon phosphorylation of RsbV, RsbW is released and binds to sigma-B, thereby blocking its ability to form an RNA polymerase holoenzyme (E-sigma-B). The polypeptide is Serine-protein kinase RsbW (Staphylococcus aureus (strain Newman)).